We begin with the raw amino-acid sequence, 30 residues long: Kalata-B14 (30 aa).

Residues 1–30 constitute a cross-link (cyclopeptide (Gly-Asp)); the sequence is GLPVCGESCFGGTCNTPGCACDPWPVCTRD. 3 cysteine pairs are disulfide-bonded: Cys5-Cys19, Cys9-Cys21, and Cys14-Cys27.

In terms of processing, this is a cyclic peptide.

Probably participates in a plant defense mechanism. The sequence is that of Kalata-B14 from Oldenlandia affinis.